A 256-amino-acid polypeptide reads, in one-letter code: Isoprenyl transferase (256 aa).

Residues 1 to 22 (MLEKFSKWKGNRSNHTTPSHSL) form a disordered region. The active site involves Asp-36. Asp-36 lines the Mg(2+) pocket. Residues 37–40 (GNGR), Trp-41, Arg-49, His-53, and 81–83 (STE) each bind substrate. Asn-84 acts as the Proton acceptor in catalysis. Substrate-binding positions include Trp-85, Arg-87, Arg-204, and 210 to 212 (RLS). Glu-223 contributes to the Mg(2+) binding site.

It belongs to the UPP synthase family. Homodimer. Mg(2+) is required as a cofactor.

Catalyzes the condensation of isopentenyl diphosphate (IPP) with allylic pyrophosphates generating different type of terpenoids. This Halalkalibacterium halodurans (strain ATCC BAA-125 / DSM 18197 / FERM 7344 / JCM 9153 / C-125) (Bacillus halodurans) protein is Isoprenyl transferase.